The following is an 85-amino-acid chain: Putative membrane protein insertion efficiency factor (85 aa).

Belongs to the UPF0161 family.

It is found in the cell inner membrane. Could be involved in insertion of integral membrane proteins into the membrane. The sequence is that of Putative membrane protein insertion efficiency factor from Phenylobacterium zucineum (strain HLK1).